The sequence spans 271 residues: Dipeptidyl-peptidase 6 (271 aa).

SH3b domains follow at residues 1 to 64 (MNAI…LFDD) and 72 to 140 (QKAQ…HPKI). In terms of domain architecture, NlpC/P60 spans 148–268 (HAFRENVVQT…DLATTITAIG (121 aa)). C178 (nucleophile) is an active-site residue. H224 functions as the Proton acceptor in the catalytic mechanism. H236 is an active-site residue.

This sequence belongs to the peptidase C40 family.

The protein localises to the cytoplasm. Involved in cell sporulation. Hydrolyzes gamma-D-Glu-L-(meso)A2pm linkages only in those peptide units that have a free N-terminal L-alanine. The polypeptide is Dipeptidyl-peptidase 6 (Lysinibacillus sphaericus (Bacillus sphaericus)).